The chain runs to 315 residues: tRNA uridine(34) hydroxylase (315 aa).

One can recognise a Rhodanese domain in the interval 136–230; the sequence is SDPETLVIDT…YLEEIPPEES (95 aa). Catalysis depends on Cys190, which acts as the Cysteine persulfide intermediate.

This sequence belongs to the TrhO family.

It catalyses the reaction uridine(34) in tRNA + AH2 + O2 = 5-hydroxyuridine(34) in tRNA + A + H2O. Its function is as follows. Catalyzes oxygen-dependent 5-hydroxyuridine (ho5U) modification at position 34 in tRNAs. The sequence is that of tRNA uridine(34) hydroxylase from Sinorhizobium medicae (strain WSM419) (Ensifer medicae).